We begin with the raw amino-acid sequence, 404 residues long: Aspartokinase 1 (404 aa).

Residue K7–G10 participates in ATP binding. Residue H25–I30 participates in substrate binding. S41 is a binding site for ATP. Residues T52–S54, E79, L130–A131, R155–S158, and S158 each bind substrate. ATP is bound by residues T178–D179 and M184–R189. Residues S299–D301, V355–T356, P369–I370, and S376–H377 each bind substrate. Positions A344–K404 constitute an ACT domain.

Belongs to the aspartokinase family. Tetramer consisting of 2 isoforms Alpha (catalytic) and 2 isoforms Beta (function not known).

The catalysed reaction is L-aspartate + ATP = 4-phospho-L-aspartate + ADP. It functions in the pathway amino-acid biosynthesis; L-lysine biosynthesis via DAP pathway; (S)-tetrahydrodipicolinate from L-aspartate: step 1/4. It participates in amino-acid biosynthesis; L-methionine biosynthesis via de novo pathway; L-homoserine from L-aspartate: step 1/3. The protein operates within amino-acid biosynthesis; L-threonine biosynthesis; L-threonine from L-aspartate: step 1/5. Diaminopimelate-sensitive. Functionally, catalyzes the phosphorylation of the beta-carboxyl group of aspartic acid with ATP to yield 4-phospho-L-aspartate, which is involved in the branched biosynthetic pathway leading to the biosynthesis of amino acids threonine, isoleucine and methionine. The protein is Aspartokinase 1 (dapG) of Bacillus subtilis (strain 168).